The chain runs to 263 residues: Shikimate dehydrogenase (NADP(+)) (263 aa).

Shikimate is bound by residues 16–18 and Thr-65; that span reads SKS. Catalysis depends on Lys-69, which acts as the Proton acceptor. Positions 90 and 105 each coordinate shikimate. Residues 125–129 and Leu-208 each bind NADP(+); that span reads GSGGS. Tyr-210 contacts shikimate. Gly-230 contacts NADP(+).

Belongs to the shikimate dehydrogenase family. As to quaternary structure, homodimer.

The enzyme catalyses shikimate + NADP(+) = 3-dehydroshikimate + NADPH + H(+). It functions in the pathway metabolic intermediate biosynthesis; chorismate biosynthesis; chorismate from D-erythrose 4-phosphate and phosphoenolpyruvate: step 4/7. Inhibited by curcumin, 3-(2-naphthyloxy)-4-oxo-2-(trifluoromethyl)-4H-chromen-7-yl 3-chlorobenzoate, butyl 2-{[3-(2-naphthyloxy)-4-oxo-2-(trifluoromethyl)-4H-chromen-7-yl]oxy}propanoate, 2-({2-[(2-{[2-(2,3-dimethylanilino)-2-oxoethyl]sulfanyl}-1,3-benzothiazol-6-yl)amino]-2-oxoethyl}sulfanyl)-N-(2-naphthyl)acetamide, and maesaquinone diacetate. In terms of biological role, involved in the biosynthesis of the chorismate, which leads to the biosynthesis of aromatic amino acids. Catalyzes the reversible NADPH linked reduction of 3-dehydroshikimate (DHSA) to yield shikimate (SA). It can also use NAD to oxidize shikimate. The polypeptide is Shikimate dehydrogenase (NADP(+)) (Helicobacter pylori (Campylobacter pylori)).